A 155-amino-acid chain; its full sequence is SsrA-binding protein (155 aa).

This sequence belongs to the SmpB family.

Its subcellular location is the cytoplasm. Functionally, required for rescue of stalled ribosomes mediated by trans-translation. Binds to transfer-messenger RNA (tmRNA), required for stable association of tmRNA with ribosomes. tmRNA and SmpB together mimic tRNA shape, replacing the anticodon stem-loop with SmpB. tmRNA is encoded by the ssrA gene; the 2 termini fold to resemble tRNA(Ala) and it encodes a 'tag peptide', a short internal open reading frame. During trans-translation Ala-aminoacylated tmRNA acts like a tRNA, entering the A-site of stalled ribosomes, displacing the stalled mRNA. The ribosome then switches to translate the ORF on the tmRNA; the nascent peptide is terminated with the 'tag peptide' encoded by the tmRNA and targeted for degradation. The ribosome is freed to recommence translation, which seems to be the essential function of trans-translation. This is SsrA-binding protein from Ligilactobacillus salivarius (strain UCC118) (Lactobacillus salivarius).